Here is a 1423-residue protein sequence, read N- to C-terminus: DNA-directed RNA polymerase, mitochondrial (1423 aa).

The transit peptide at 1–73 (MLPRTASATR…RATVGFERHL (73 aa)) directs the protein to the mitochondrion. The disordered stretch occupies residues 266–303 (NMPDNVDPDTFAQQQQQQQQQQQQQQEQQQQQDTSIDQ). The segment covering 278 to 297 (QQQQQQQQQQQQQQEQQQQQ) has biased composition (low complexity). Residues Asp901 and Lys970 contribute to the active site. The span at 1055-1064 (EFERSERSPH) shows a compositional bias: basic and acidic residues. The segment at 1055–1087 (EFERSERSPHGDGTASGENITLAGNPRKSSAHK) is disordered. The active site involves Asp1180. Residues 1316–1342 (VRRGREMDEEGEVDGSEEAVEHEDGMH) form a disordered region. Positions 1322 to 1336 (MDEEGEVDGSEEAVE) are enriched in acidic residues.

This sequence belongs to the phage and mitochondrial RNA polymerase family.

Its subcellular location is the mitochondrion. It carries out the reaction RNA(n) + a ribonucleoside 5'-triphosphate = RNA(n+1) + diphosphate. Functionally, DNA-dependent RNA polymerase catalyzes the transcription of DNA into RNA using the four ribonucleoside triphosphates as substrates. The sequence is that of DNA-directed RNA polymerase, mitochondrial (cyt-5) from Neurospora crassa (strain ATCC 24698 / 74-OR23-1A / CBS 708.71 / DSM 1257 / FGSC 987).